The following is a 487-amino-acid chain: Cobyric acid synthase (487 aa).

The region spanning Gly-249 to Phe-435 is the GATase cobBQ-type domain. The Nucleophile role is filled by Cys-330. His-427 is an active-site residue.

It belongs to the CobB/CobQ family. CobQ subfamily.

It functions in the pathway cofactor biosynthesis; adenosylcobalamin biosynthesis. Its function is as follows. Catalyzes amidations at positions B, D, E, and G on adenosylcobyrinic A,C-diamide. NH(2) groups are provided by glutamine, and one molecule of ATP is hydrogenolyzed for each amidation. In Clostridium perfringens (strain SM101 / Type A), this protein is Cobyric acid synthase.